Reading from the N-terminus, the 328-residue chain is DNA-directed RNA polymerase subunit alpha (328 aa).

Residues 1–231 (MIYQMQMPER…EHVSLFANFS (231 aa)) form an alpha N-terminal domain (alpha-NTD) region. An alpha C-terminal domain (alpha-CTD) region spans residues 252-328 (MRKLLQTRIE…MDITKYQMKS (77 aa)).

It belongs to the RNA polymerase alpha chain family. In terms of assembly, homodimer. The RNAP catalytic core consists of 2 alpha, 1 beta, 1 beta' and 1 omega subunit. When a sigma factor is associated with the core the holoenzyme is formed, which can initiate transcription.

It carries out the reaction RNA(n) + a ribonucleoside 5'-triphosphate = RNA(n+1) + diphosphate. Functionally, DNA-dependent RNA polymerase catalyzes the transcription of DNA into RNA using the four ribonucleoside triphosphates as substrates. This is DNA-directed RNA polymerase subunit alpha from Prosthecochloris aestuarii (strain DSM 271 / SK 413).